A 500-amino-acid polypeptide reads, in one-letter code: Ent-kaurene oxidase P450-4 (500 aa).

A helical membrane pass occupies residues 6–26; that stretch reads VHWLIYVAFGAWLCSYVIHVL. N-linked (GlcNAc...) asparagine glycosylation is present at N240. A heme-binding site is contributed by C441. An N-linked (GlcNAc...) asparagine glycan is attached at N475.

The protein belongs to the cytochrome P450 family. Heme is required as a cofactor.

The protein resides in the membrane. The catalysed reaction is ent-kaur-16-ene + 3 reduced [NADPH--hemoprotein reductase] + 3 O2 = ent-kaur-16-en-19-oate + 3 oxidized [NADPH--hemoprotein reductase] + 4 H2O + 4 H(+). Its pathway is plant hormone biosynthesis; gibberellin biosynthesis. Its function is as follows. Ent-kaurene oxidase; part of the gene cluster that mediates the biosynthesis of gibberellins (GAs), diterpenoids that may provide a selective advantage during infection of the preferred host plant, rice. Gibberellins (GAs) are diterpenoids and are synthesized via the mevalonate pathway. Biosynthesis of the major metabolite GA3 (gibberellic acid) from geranylgeranyl diphosphate (GGPP) requires 13 steps. The GGPP produced by the geranylgeranyl diphosphate synthase GGS2 is converted to ent-kaurene via ent-copalyldiphosphate in a two-step cyclization reaction performed by the bifunctional ent-copalyl diphosphate synthase/ent-kaurene synthase enzyme (CPS/KS). Ent-Kaurene is metabolized to GAs by a series of oxidation reactions catalyzed by cytochrome P450 monooxygenases. Cytochrome P450 monooxygenase P450-4 is an ent-kaurene oxidase that catalyzes the three oxidation steps between ent-kaurene and ent-kaurenoic acid. The highly multifunctional cytochrome P450 monooxygenase P450-1 then catalyzes four steps involving oxidation at two carbon atoms, in the main pathway from ent-kaurenoic acid to GA14 via GA12-aldehyde as well as producing kaurenolides and fujenoic acids as by-products. The cytochrome P450 monooxygenase P450-2 then converts GA14 to GA4 by removal of C-20. GA4 is further converted to GA7 by the GA4 desaturase DES via 1,2-desaturation before cytochrome P450 monooxygenase P450-3, a 13-hydroxylase, hydroxylates GA7 to GA3, the final product of the GA-biosynthetic pathway. The polypeptide is Ent-kaurene oxidase P450-4 (Gibberella fujikuroi (strain CBS 195.34 / IMI 58289 / NRRL A-6831) (Bakanae and foot rot disease fungus)).